The chain runs to 360 residues: Phospho-N-acetylmuramoyl-pentapeptide-transferase (360 aa).

A run of 10 helical transmembrane segments spans residues 26-46 (AILG…AMIR), 70-90 (GTPT…TLLW), 97-117 (FVWV…IDDY), 134-154 (FFWQ…TAQA), 168-188 (VAIQ…VGAS), 199-219 (GLAI…AYLS), 236-256 (VGDL…FLWF), 263-283 (VFMG…LAVV), 288-308 (IVLV…IMQV), and 338-358 (VIVR…ATLK).

This sequence belongs to the glycosyltransferase 4 family. MraY subfamily. Mg(2+) serves as cofactor.

The protein localises to the cell inner membrane. It carries out the reaction UDP-N-acetyl-alpha-D-muramoyl-L-alanyl-gamma-D-glutamyl-meso-2,6-diaminopimeloyl-D-alanyl-D-alanine + di-trans,octa-cis-undecaprenyl phosphate = di-trans,octa-cis-undecaprenyl diphospho-N-acetyl-alpha-D-muramoyl-L-alanyl-D-glutamyl-meso-2,6-diaminopimeloyl-D-alanyl-D-alanine + UMP. The protein operates within cell wall biogenesis; peptidoglycan biosynthesis. Its function is as follows. Catalyzes the initial step of the lipid cycle reactions in the biosynthesis of the cell wall peptidoglycan: transfers peptidoglycan precursor phospho-MurNAc-pentapeptide from UDP-MurNAc-pentapeptide onto the lipid carrier undecaprenyl phosphate, yielding undecaprenyl-pyrophosphoryl-MurNAc-pentapeptide, known as lipid I. This chain is Phospho-N-acetylmuramoyl-pentapeptide-transferase, found in Thioalkalivibrio sulfidiphilus (strain HL-EbGR7).